We begin with the raw amino-acid sequence, 88 residues long: Small ribosomal subunit protein uS15 (88 aa).

It belongs to the universal ribosomal protein uS15 family. As to quaternary structure, part of the 30S ribosomal subunit. Forms a bridge to the 50S subunit in the 70S ribosome, contacting the 23S rRNA.

One of the primary rRNA binding proteins, it binds directly to 16S rRNA where it helps nucleate assembly of the platform of the 30S subunit by binding and bridging several RNA helices of the 16S rRNA. In terms of biological role, forms an intersubunit bridge (bridge B4) with the 23S rRNA of the 50S subunit in the ribosome. The polypeptide is Small ribosomal subunit protein uS15 (Flavobacterium psychrophilum (strain ATCC 49511 / DSM 21280 / CIP 103535 / JIP02/86)).